A 431-amino-acid chain; its full sequence is Gamma-glutamyl phosphate reductase (431 aa).

The protein belongs to the gamma-glutamyl phosphate reductase family.

It localises to the cytoplasm. It carries out the reaction L-glutamate 5-semialdehyde + phosphate + NADP(+) = L-glutamyl 5-phosphate + NADPH + H(+). Its pathway is amino-acid biosynthesis; L-proline biosynthesis; L-glutamate 5-semialdehyde from L-glutamate: step 2/2. In terms of biological role, catalyzes the NADPH-dependent reduction of L-glutamate 5-phosphate into L-glutamate 5-semialdehyde and phosphate. The product spontaneously undergoes cyclization to form 1-pyrroline-5-carboxylate. This Trichodesmium erythraeum (strain IMS101) protein is Gamma-glutamyl phosphate reductase.